Consider the following 143-residue polypeptide: Nucleoside diphosphate kinase (143 aa).

Residues Lys-11, Phe-59, Arg-87, Thr-93, Arg-104, and Asn-114 each contribute to the ATP site. His-117 functions as the Pros-phosphohistidine intermediate in the catalytic mechanism.

This sequence belongs to the NDK family. Homotetramer. Requires Mg(2+) as cofactor.

The protein resides in the cytoplasm. The catalysed reaction is a 2'-deoxyribonucleoside 5'-diphosphate + ATP = a 2'-deoxyribonucleoside 5'-triphosphate + ADP. It carries out the reaction a ribonucleoside 5'-diphosphate + ATP = a ribonucleoside 5'-triphosphate + ADP. Major role in the synthesis of nucleoside triphosphates other than ATP. The ATP gamma phosphate is transferred to the NDP beta phosphate via a ping-pong mechanism, using a phosphorylated active-site intermediate. The polypeptide is Nucleoside diphosphate kinase (Shewanella woodyi (strain ATCC 51908 / MS32)).